Here is a 459-residue protein sequence, read N- to C-terminus: Putrescine aminotransferase (459 aa).

Residues glycine 150 to threonine 151 and glutamine 274 each bind pyridoxal 5'-phosphate. At lysine 300 the chain carries N6-(pyridoxal phosphate)lysine. Threonine 332 contributes to the pyridoxal 5'-phosphate binding site.

It belongs to the class-III pyridoxal-phosphate-dependent aminotransferase family. Putrescine aminotransferase subfamily. The cofactor is pyridoxal 5'-phosphate.

It carries out the reaction an alkane-alpha,omega-diamine + 2-oxoglutarate = an omega-aminoaldehyde + L-glutamate. It catalyses the reaction putrescine + 2-oxoglutarate = 1-pyrroline + L-glutamate + H2O. The catalysed reaction is cadaverine + 2-oxoglutarate = 5-aminopentanal + L-glutamate. It participates in amine and polyamine degradation; putrescine degradation; 4-aminobutanal from putrescine (transaminase route): step 1/1. Catalyzes the aminotransferase reaction from putrescine to 2-oxoglutarate, leading to glutamate and 4-aminobutanal, which spontaneously cyclizes to form 1-pyrroline. This is the first step in one of two pathways for putrescine degradation, where putrescine is converted into 4-aminobutanoate (gamma-aminobutyrate or GABA) via 4-aminobutanal. Also functions as a cadaverine transaminase in a a L-lysine degradation pathway to succinate that proceeds via cadaverine, glutarate and L-2-hydroxyglutarate. The sequence is that of Putrescine aminotransferase from Klebsiella pneumoniae subsp. pneumoniae (strain ATCC 700721 / MGH 78578).